Consider the following 235-residue polypeptide: uncharacterized protein (235 aa).

Disordered stretches follow at residues 1-36 and 213-235; these read MGML…GRGS and VKTR…ILEQ.

This is an uncharacterized protein from Homo sapiens (Human).